A 51-amino-acid chain; its full sequence is Insulin (51 aa).

Intrachain disulfides connect Cys7/Cys37, Cys19/Cys50, and Cys36/Cys41.

It belongs to the insulin family. As to quaternary structure, heterodimer of a B chain and an A chain linked by two disulfide bonds.

It localises to the secreted. Its function is as follows. Insulin decreases blood glucose concentration. It increases cell permeability to monosaccharides, amino acids and fatty acids. It accelerates glycolysis, the pentose phosphate cycle, and glycogen synthesis in liver. This chain is Insulin (INS), found in Alligator mississippiensis (American alligator).